Reading from the N-terminus, the 351-residue chain is Holliday junction branch migration complex subunit RuvB (351 aa).

Residues 1–186 (MDEKIETRLI…FGIVQRLEFY (186 aa)) are large ATPase domain (RuvB-L). ATP-binding positions include Ile-25, Arg-26, Gly-67, Lys-70, Thr-71, Thr-72, 133-135 (EDF), Arg-176, Tyr-186, and Arg-223. Position 71 (Thr-71) interacts with Mg(2+). The interval 187–257 (RIPDLIHIVK…IAKEALDLLN (71 aa)) is small ATPAse domain (RuvB-S). The segment at 260–351 (IRGLDVMDRK…ENFDLLGKVE (92 aa)) is head domain (RuvB-H). DNA-binding residues include Arg-296, Arg-315, and Arg-320.

The protein belongs to the RuvB family. As to quaternary structure, homohexamer. Forms an RuvA(8)-RuvB(12)-Holliday junction (HJ) complex. HJ DNA is sandwiched between 2 RuvA tetramers; dsDNA enters through RuvA and exits via RuvB. An RuvB hexamer assembles on each DNA strand where it exits the tetramer. Each RuvB hexamer is contacted by two RuvA subunits (via domain III) on 2 adjacent RuvB subunits; this complex drives branch migration. In the full resolvosome a probable DNA-RuvA(4)-RuvB(12)-RuvC(2) complex forms which resolves the HJ.

It is found in the cytoplasm. The enzyme catalyses ATP + H2O = ADP + phosphate + H(+). The RuvA-RuvB-RuvC complex processes Holliday junction (HJ) DNA during genetic recombination and DNA repair, while the RuvA-RuvB complex plays an important role in the rescue of blocked DNA replication forks via replication fork reversal (RFR). RuvA specifically binds to HJ cruciform DNA, conferring on it an open structure. The RuvB hexamer acts as an ATP-dependent pump, pulling dsDNA into and through the RuvAB complex. RuvB forms 2 homohexamers on either side of HJ DNA bound by 1 or 2 RuvA tetramers; 4 subunits per hexamer contact DNA at a time. Coordinated motions by a converter formed by DNA-disengaged RuvB subunits stimulates ATP hydrolysis and nucleotide exchange. Immobilization of the converter enables RuvB to convert the ATP-contained energy into a lever motion, pulling 2 nucleotides of DNA out of the RuvA tetramer per ATP hydrolyzed, thus driving DNA branch migration. The RuvB motors rotate together with the DNA substrate, which together with the progressing nucleotide cycle form the mechanistic basis for DNA recombination by continuous HJ branch migration. Branch migration allows RuvC to scan DNA until it finds its consensus sequence, where it cleaves and resolves cruciform DNA. The chain is Holliday junction branch migration complex subunit RuvB from Coxiella burnetii (strain CbuG_Q212) (Coxiella burnetii (strain Q212)).